The primary structure comprises 143 residues: Ribonuclease H (143 aa).

The 136-residue stretch at 1–136 (MQEIEIFCDG…CDSLAKLEAQ (136 aa)) folds into the RNase H type-1 domain. Mg(2+)-binding residues include Asp9, Glu47, Asp69, and Asp128.

The protein belongs to the RNase H family. In terms of assembly, monomer. Requires Mg(2+) as cofactor.

Its subcellular location is the cytoplasm. The catalysed reaction is Endonucleolytic cleavage to 5'-phosphomonoester.. In terms of biological role, endonuclease that specifically degrades the RNA of RNA-DNA hybrids. This Helicobacter pylori (strain HPAG1) protein is Ribonuclease H.